The primary structure comprises 94 residues: Large ribosomal subunit protein uL23 (94 aa).

It belongs to the universal ribosomal protein uL23 family. Part of the 50S ribosomal subunit. Contacts protein L29, and trigger factor when it is bound to the ribosome.

Its function is as follows. One of the early assembly proteins it binds 23S rRNA. One of the proteins that surrounds the polypeptide exit tunnel on the outside of the ribosome. Forms the main docking site for trigger factor binding to the ribosome. In Listeria innocua serovar 6a (strain ATCC BAA-680 / CLIP 11262), this protein is Large ribosomal subunit protein uL23.